Reading from the N-terminus, the 189-residue chain is Mediator of RNA polymerase II transcription subunit 30 (189 aa).

A coiled-coil region spans residues 138–178; sequence SPESEDEIEKLEEQALSLRMEIAKKNVHVKELIDKLRELIA.

Belongs to the plant Mediator complex subunit 30 family. As to quaternary structure, component of the Mediator complex.

The protein resides in the nucleus. Functionally, component of the Mediator complex, a coactivator involved in the regulated transcription of nearly all RNA polymerase II-dependent genes. Mediator functions as a bridge to convey information from gene-specific regulatory proteins to the basal RNA polymerase II transcription machinery. The Mediator complex, having a compact conformation in its free form, is recruited to promoters by direct interactions with regulatory proteins and serves for the assembly of a functional preinitiation complex with RNA polymerase II and the general transcription factors. This Arabidopsis thaliana (Mouse-ear cress) protein is Mediator of RNA polymerase II transcription subunit 30 (MED30).